The primary structure comprises 165 residues: Pro-MCH (165 aa).

The signal sequence occupies residues 1–21; the sequence is MAKMTLSSYMLMLAFSLFSQG. The segment at 66 to 89 is disordered; sequence YKNDESGFMNDDDNKNSKNTGSKQ. Residue Ile-143 is modified to Isoleucine amide. An intrachain disulfide couples Cys-153 to Cys-162.

Belongs to the MCH family. Pro-MCH is processed differentially in the brain and in peripheral organs producing two neuropeptides; NEI and MCH. A third peptide, NGE, may also be produced. Preferential processing in neurons by prohormone convertase 2 (PC2) generates NEI. MCH is generated in neurons of the lateral hypothalmic area by several prohormone convertases including PC1/3, PC2 and PC5/6. As to expression, predominantly expressed in hypothalamus. Also found in heart, intestine, spleen and testis (spermatogonia, early spermatocytes and Sertoli cells). In brain only mature MCH and NEI peptides are present. In peripheral tissues a large product, encompassing the NEI and MCH domains of the precursor, is found predominantly.

The protein localises to the secreted. MCH may act as a neurotransmitter or neuromodulator in a broad array of neuronal functions directed toward the regulation of goal-directed behavior, such as food intake, and general arousal. The protein is Pro-MCH (Pmch) of Mus musculus (Mouse).